A 147-amino-acid chain; its full sequence is Hemoglobin subunit delta (147 aa).

One can recognise a Globin domain in the interval 3-147 (HLTGEEKAAV…VANALAHKYH (145 aa)). 2 residues coordinate heme b: His-64 and His-93.

Belongs to the globin family. As to quaternary structure, heterotetramer of two delta chains and two alpha chains. In terms of tissue distribution, red blood cells.

The protein is Hemoglobin subunit delta (HBD) of Ailuropoda melanoleuca (Giant panda).